Here is a 246-residue protein sequence, read N- to C-terminus: 1-(5-phosphoribosyl)-5-[(5-phosphoribosylamino)methylideneamino] imidazole-4-carboxamide isomerase (246 aa).

The active-site Proton acceptor is the aspartate 8. Aspartate 130 serves as the catalytic Proton donor.

Belongs to the HisA/HisF family.

It is found in the cytoplasm. The enzyme catalyses 1-(5-phospho-beta-D-ribosyl)-5-[(5-phospho-beta-D-ribosylamino)methylideneamino]imidazole-4-carboxamide = 5-[(5-phospho-1-deoxy-D-ribulos-1-ylimino)methylamino]-1-(5-phospho-beta-D-ribosyl)imidazole-4-carboxamide. Its pathway is amino-acid biosynthesis; L-histidine biosynthesis; L-histidine from 5-phospho-alpha-D-ribose 1-diphosphate: step 4/9. This chain is 1-(5-phosphoribosyl)-5-[(5-phosphoribosylamino)methylideneamino] imidazole-4-carboxamide isomerase, found in Shigella sonnei (strain Ss046).